The sequence spans 451 residues: Chromosomal replication initiator protein DnaA 2 (451 aa).

The domain I, interacts with DnaA modulators stretch occupies residues 1 to 68 (MQAWEEFLKA…QQKFINGNNK (68 aa)). Residues 68-104 (KRIKIHLSVANTPQRAKKTKTANKEKDFKAPFELTFD) are domain II. The domain III, AAA+ region stretch occupies residues 105 to 326 (ELDPLCLFPY…KGLEALVLRL (222 aa)). ATP contacts are provided by G156, G158, K159, and T160. A domain IV, binds dsDNA region spans residues 327-451 (HLDAKHSITA…CHIILKKLQG (125 aa)).

Belongs to the DnaA family. Oligomerizes as a right-handed, spiral filament on DNA at oriC.

It is found in the cytoplasm. Plays an essential role in the initiation and regulation of chromosomal replication. ATP-DnaA binds to the origin of replication (oriC) to initiate formation of the DNA replication initiation complex once per cell cycle. Binds the DnaA box (a 9 base pair repeat at the origin) and separates the double-stranded (ds)DNA. Forms a right-handed helical filament on oriC DNA; dsDNA binds to the exterior of the filament while single-stranded (ss)DNA is stabiized in the filament's interior. The ATP-DnaA-oriC complex binds and stabilizes one strand of the AT-rich DNA unwinding element (DUE), permitting loading of DNA polymerase. After initiation quickly degrades to an ADP-DnaA complex that is not apt for DNA replication. Binds acidic phospholipids. This chain is Chromosomal replication initiator protein DnaA 2, found in Protochlamydia amoebophila (strain UWE25).